A 676-amino-acid chain; its full sequence is DNA ligase (676 aa).

NAD(+)-binding positions include Asp-39–Asp-43, Ser-88–Asp-91, and Glu-118. Lys-120 acts as the N6-AMP-lysine intermediate in catalysis. Positions 141, 175, 291, and 315 each coordinate NAD(+). Zn(2+)-binding residues include Cys-409, Cys-412, Cys-427, and Cys-432. Residues Glu-595–Phe-676 form the BRCT domain.

It belongs to the NAD-dependent DNA ligase family. LigA subfamily. Requires Mg(2+) as cofactor. Mn(2+) serves as cofactor.

The catalysed reaction is NAD(+) + (deoxyribonucleotide)n-3'-hydroxyl + 5'-phospho-(deoxyribonucleotide)m = (deoxyribonucleotide)n+m + AMP + beta-nicotinamide D-nucleotide.. In terms of biological role, DNA ligase that catalyzes the formation of phosphodiester linkages between 5'-phosphoryl and 3'-hydroxyl groups in double-stranded DNA using NAD as a coenzyme and as the energy source for the reaction. It is essential for DNA replication and repair of damaged DNA. The sequence is that of DNA ligase from Enterococcus faecalis (strain ATCC 700802 / V583).